The primary structure comprises 53 residues: Photoreceptor disk component PRCD (53 aa).

C2 is lipidated: S-palmitoyl cysteine. The segment at 24–53 is disordered; it reads PEPSRVDGTVVGSGSDTDLQSTGREKGPVK. Positions 35–45 are enriched in polar residues; the sequence is GSGSDTDLQST.

This sequence belongs to the PRCD family. In terms of assembly, interacts with RHO/rhodopsin; the interaction promotes PRCD stability. In terms of processing, palmitoylated at Cys-2. Palmitoylation is essential for protein stability and trafficking to the photoreceptor outer segment, but does not appear to be essential for membrane localization. Probably palmitoylated by ZDHHC3. Post-translationally, phosphorylated. In terms of tissue distribution, expressed in retina, where it localizes to both rod and cone photoreceptors (at protein level).

It localises to the cell projection. The protein localises to the cilium. It is found in the photoreceptor outer segment. The protein resides in the membrane. Its subcellular location is the endoplasmic reticulum. It localises to the golgi apparatus. Its function is as follows. Involved in vision. In Mus musculus (Mouse), this protein is Photoreceptor disk component PRCD.